The sequence spans 486 residues: NADH-quinone oxidoreductase subunit N (486 aa).

A run of 14 helical transmembrane segments spans residues 8–28, 38–58, 73–93, 105–125, 128–148, 169–189, 196–216, 235–255, 269–289, 304–324, 325–345, 373–393, 405–427, and 454–474; these read FIALLPLLITSATLVVVMLAV, ATLSVIGLNLALLSLLPVLGV, ACFYMALVLVSALACVTLAHA, LYLLLLLATAGGLVLVSAQHL, LFIGLELLSVPVYGMVAYAFF, FLLFGMALLYAESGTLGFAGL, HVLSGPLVSVGVGMMLVGLGF, PAPVSAFLATASKVAVFAVLL, LLNISLSVIAVASILFGNLLA, IAHLGYLLVALIASKGMAVEA, VGVYLATYVLTSLGAFGVITL, AVMTVMMLSLAGIPLTAGFIG, HLWWLIGALVLGSAIGLYYYLRV, and IMLVAIALLAFFLGVYPQPLL.

The protein belongs to the complex I subunit 2 family. NDH-1 is composed of 13 different subunits. Subunits NuoA, H, J, K, L, M, N constitute the membrane sector of the complex.

The protein resides in the cell inner membrane. It catalyses the reaction a quinone + NADH + 5 H(+)(in) = a quinol + NAD(+) + 4 H(+)(out). In terms of biological role, NDH-1 shuttles electrons from NADH, via FMN and iron-sulfur (Fe-S) centers, to quinones in the respiratory chain. The immediate electron acceptor for the enzyme in this species is believed to be ubiquinone. Couples the redox reaction to proton translocation (for every two electrons transferred, four hydrogen ions are translocated across the cytoplasmic membrane), and thus conserves the redox energy in a proton gradient. The protein is NADH-quinone oxidoreductase subunit N of Pseudomonas aeruginosa (strain ATCC 15692 / DSM 22644 / CIP 104116 / JCM 14847 / LMG 12228 / 1C / PRS 101 / PAO1).